Here is a 223-residue protein sequence, read N- to C-terminus: MTIAKMIDHTALKPDTTKEQILTLTKEAREYGFASVCVNPTWVKLSAEQLAGAESVVCTVIGFPLGANTPEVKAFEVKDAIQNGAKEVDMVINIGALKDKDDELVERDIRAVVDVAKGKALVKVIIETCLLTDEEKVRACEIAVKAGTDFVKTSTGFSTGGATAEDIALMRKTVGPNIGVKASGGVRTKEDVEKMIEAGATRIGASAGVAIVSGEKPAKPDNY.

The active-site Proton donor/acceptor is the aspartate 89. The Schiff-base intermediate with acetaldehyde role is filled by lysine 152. The Proton donor/acceptor role is filled by lysine 181.

The protein belongs to the DeoC/FbaB aldolase family. DeoC type 1 subfamily.

Its subcellular location is the cytoplasm. The catalysed reaction is 2-deoxy-D-ribose 5-phosphate = D-glyceraldehyde 3-phosphate + acetaldehyde. Its pathway is carbohydrate degradation; 2-deoxy-D-ribose 1-phosphate degradation; D-glyceraldehyde 3-phosphate and acetaldehyde from 2-deoxy-alpha-D-ribose 1-phosphate: step 2/2. In terms of biological role, catalyzes a reversible aldol reaction between acetaldehyde and D-glyceraldehyde 3-phosphate to generate 2-deoxy-D-ribose 5-phosphate. The protein is Deoxyribose-phosphate aldolase of Listeria monocytogenes serovar 1/2a (strain ATCC BAA-679 / EGD-e).